A 503-amino-acid polypeptide reads, in one-letter code: Cobyric acid synthase (503 aa).

Residues 251-450 (DLDIAVIRLP…IHGIFENAAF (200 aa)) enclose the GATase cobBQ-type domain. Cysteine 331 functions as the Nucleophile in the catalytic mechanism. Residue histidine 442 is part of the active site.

The protein belongs to the CobB/CobQ family. CobQ subfamily.

Its pathway is cofactor biosynthesis; adenosylcobalamin biosynthesis. Its function is as follows. Catalyzes amidations at positions B, D, E, and G on adenosylcobyrinic A,C-diamide. NH(2) groups are provided by glutamine, and one molecule of ATP is hydrogenolyzed for each amidation. This is Cobyric acid synthase from Dehalococcoides mccartyi (strain CBDB1).